A 2280-amino-acid chain; its full sequence is Acetyl-CoA carboxylase (2280 aa).

In terms of domain architecture, Biotin carboxylation spans 68–577 (VITSILIANN…TTGWLDRLIA (510 aa)). Residues 226–418 (ETNIVTVDDD…LPAAQLQVAM (193 aa)) enclose the ATP-grasp domain. Residue 266–271 (GGGGKG) participates in ATP binding. Residues E375, E389, and N391 each coordinate Mn(2+). R393 is an active-site residue. The 75-residue stretch at 704-778 (LEQENDPTQL…DAGDILGILT (75 aa)) folds into the Biotinyl-binding domain. Position 745 is an N6-biotinyllysine (K745). Phosphoserine occurs at positions 1179 and 1181. Positions 1524–1863 (PYPTKEWLQP…KRNNPVPISP (340 aa)) constitute a CoA carboxyltransferase N-terminal domain. The interval 1524–2181 (PYPTKEWLQP…EHYALQKITQ (658 aa)) is carboxyltransferase. CoA-binding residues include R1772, K2074, and R2076. The CoA carboxyltransferase C-terminal domain maps to 1867–2181 (TWDRDVEFYP…EHYALQKITQ (315 aa)).

As to quaternary structure, interacts with sad1. Biotin serves as cofactor. It depends on Mn(2+) as a cofactor.

It localises to the cytoplasm. The enzyme catalyses hydrogencarbonate + acetyl-CoA + ATP = malonyl-CoA + ADP + phosphate + H(+). It catalyses the reaction N(6)-biotinyl-L-lysyl-[protein] + hydrogencarbonate + ATP = N(6)-carboxybiotinyl-L-lysyl-[protein] + ADP + phosphate + H(+). It participates in lipid metabolism; malonyl-CoA biosynthesis; malonyl-CoA from acetyl-CoA: step 1/1. With respect to regulation, by phosphorylation. Its function is as follows. Carries out three functions: biotin carboxyl carrier protein, biotin carboxylase and carboxyltransferase. The protein is Acetyl-CoA carboxylase (cut6) of Schizosaccharomyces pombe (strain 972 / ATCC 24843) (Fission yeast).